The chain runs to 316 residues: Transaldolase (316 aa).

The active-site Schiff-base intermediate with substrate is the lysine 127.

This sequence belongs to the transaldolase family. Type 2 subfamily.

The protein localises to the cytoplasm. The enzyme catalyses D-sedoheptulose 7-phosphate + D-glyceraldehyde 3-phosphate = D-erythrose 4-phosphate + beta-D-fructose 6-phosphate. Its pathway is carbohydrate degradation; pentose phosphate pathway; D-glyceraldehyde 3-phosphate and beta-D-fructose 6-phosphate from D-ribose 5-phosphate and D-xylulose 5-phosphate (non-oxidative stage): step 2/3. Functionally, transaldolase is important for the balance of metabolites in the pentose-phosphate pathway. The sequence is that of Transaldolase (tal) from Helicobacter pylori (strain ATCC 700392 / 26695) (Campylobacter pylori).